Reading from the N-terminus, the 205-residue chain is Protein-L-isoaspartate O-methyltransferase (205 aa).

The active site involves Ser-56.

This sequence belongs to the methyltransferase superfamily. L-isoaspartyl/D-aspartyl protein methyltransferase family.

It is found in the cytoplasm. It catalyses the reaction [protein]-L-isoaspartate + S-adenosyl-L-methionine = [protein]-L-isoaspartate alpha-methyl ester + S-adenosyl-L-homocysteine. Its function is as follows. Catalyzes the methyl esterification of L-isoaspartyl residues in peptides and proteins that result from spontaneous decomposition of normal L-aspartyl and L-asparaginyl residues. It plays a role in the repair and/or degradation of damaged proteins. The protein is Protein-L-isoaspartate O-methyltransferase of Pyrobaculum aerophilum (strain ATCC 51768 / DSM 7523 / JCM 9630 / CIP 104966 / NBRC 100827 / IM2).